We begin with the raw amino-acid sequence, 118 residues long: MPRVKRGVTARRRHKKVLNQAKGYYGARSRVFRVAKQAVIKAGQYAYRDRRQRKRQFRALWIARINAGARDNGLSYSRLIAGLKRANVEIDRKVLADLAMNEKAAFAAVVQKAKEALA.

Belongs to the bacterial ribosomal protein bL20 family.

Its function is as follows. Binds directly to 23S ribosomal RNA and is necessary for the in vitro assembly process of the 50S ribosomal subunit. It is not involved in the protein synthesizing functions of that subunit. The chain is Large ribosomal subunit protein bL20 from Hahella chejuensis (strain KCTC 2396).